Here is a 296-residue protein sequence, read N- to C-terminus: Urease accessory protein UreD (296 aa).

This sequence belongs to the UreD family. In terms of assembly, ureD, UreF and UreG form a complex that acts as a GTP-hydrolysis-dependent molecular chaperone, activating the urease apoprotein by helping to assemble the nickel containing metallocenter of UreC. The UreE protein probably delivers the nickel.

It is found in the cytoplasm. Required for maturation of urease via the functional incorporation of the urease nickel metallocenter. This is Urease accessory protein UreD from Methylibium petroleiphilum (strain ATCC BAA-1232 / LMG 22953 / PM1).